The following is a 412-amino-acid chain: Serine hydroxymethyltransferase (412 aa).

(6S)-5,6,7,8-tetrahydrofolate is bound by residues L117 and 121 to 123 (GHL). Position 226 is an N6-(pyridoxal phosphate)lysine (K226). (6S)-5,6,7,8-tetrahydrofolate-binding positions include E242 and 350–352 (SPF).

Belongs to the SHMT family. As to quaternary structure, homodimer. Pyridoxal 5'-phosphate is required as a cofactor.

It is found in the cytoplasm. It catalyses the reaction (6R)-5,10-methylene-5,6,7,8-tetrahydrofolate + glycine + H2O = (6S)-5,6,7,8-tetrahydrofolate + L-serine. It functions in the pathway one-carbon metabolism; tetrahydrofolate interconversion. Its pathway is amino-acid biosynthesis; glycine biosynthesis; glycine from L-serine: step 1/1. In terms of biological role, catalyzes the reversible interconversion of serine and glycine with tetrahydrofolate (THF) serving as the one-carbon carrier. Appears to be specific for THF as the pteridine substrate, since the use of tetrahydromethanopterin (H4MPT) is much less efficient. Also exhibits THF-independent aldolase activity toward beta-hydroxyamino acids, producing glycine and aldehydes, via a retro-aldol mechanism. Thus, is able to catalyze the cleavage of L-allo-threonine and L-threo-beta-phenylserine. The sequence is that of Serine hydroxymethyltransferase from Methanosarcina barkeri (strain Fusaro / DSM 804).